A 148-amino-acid chain; its full sequence is Arginine repressor (148 aa).

The protein belongs to the ArgR family.

It localises to the cytoplasm. It functions in the pathway amino-acid biosynthesis; L-arginine biosynthesis [regulation]. Its function is as follows. Regulates arginine biosynthesis genes. The polypeptide is Arginine repressor (Chlorobium luteolum (strain DSM 273 / BCRC 81028 / 2530) (Pelodictyon luteolum)).